Here is a 262-residue protein sequence, read N- to C-terminus: Indole-3-glycerol phosphate synthase (262 aa).

Belongs to the TrpC family.

The catalysed reaction is 1-(2-carboxyphenylamino)-1-deoxy-D-ribulose 5-phosphate + H(+) = (1S,2R)-1-C-(indol-3-yl)glycerol 3-phosphate + CO2 + H2O. It participates in amino-acid biosynthesis; L-tryptophan biosynthesis; L-tryptophan from chorismate: step 4/5. This is Indole-3-glycerol phosphate synthase from Thiobacillus denitrificans (strain ATCC 25259 / T1).